We begin with the raw amino-acid sequence, 237 residues long: Probable glutathione-independent glyoxalase SNO4 (237 aa).

Catalysis depends on residues cysteine 138, histidine 139, and glutamate 170.

Belongs to the peptidase C56 family. HSP31-like subfamily. Homodimer.

The protein resides in the cytoplasm. The protein localises to the P-body. It carries out the reaction methylglyoxal + H2O = (R)-lactate + H(+). Catalyzes the conversion of methylglyoxal (MG) to D-lactate in a single glutathione (GSH)-independent step. May play a role in detoxifying endogenously produced glyoxals. Involved in protection against reactive oxygen species (ROS). Important for viability in stationary phase. May negatively regulate TORC1 in response to nutrient limitation. This Saccharomyces cerevisiae (strain ATCC 204508 / S288c) (Baker's yeast) protein is Probable glutathione-independent glyoxalase SNO4.